Consider the following 140-residue polypeptide: Endoribonuclease YbeY (140 aa).

Residues His-99, His-103, and His-109 each contribute to the Zn(2+) site.

The protein belongs to the endoribonuclease YbeY family. Zn(2+) is required as a cofactor.

It localises to the cytoplasm. In terms of biological role, single strand-specific metallo-endoribonuclease involved in late-stage 70S ribosome quality control and in maturation of the 3' terminus of the 16S rRNA. In Wolinella succinogenes (strain ATCC 29543 / DSM 1740 / CCUG 13145 / JCM 31913 / LMG 7466 / NCTC 11488 / FDC 602W) (Vibrio succinogenes), this protein is Endoribonuclease YbeY.